Consider the following 258-residue polypeptide: Indole-3-glycerol phosphate synthase (258 aa).

The protein belongs to the TrpC family.

The enzyme catalyses 1-(2-carboxyphenylamino)-1-deoxy-D-ribulose 5-phosphate + H(+) = (1S,2R)-1-C-(indol-3-yl)glycerol 3-phosphate + CO2 + H2O. It functions in the pathway amino-acid biosynthesis; L-tryptophan biosynthesis; L-tryptophan from chorismate: step 4/5. This is Indole-3-glycerol phosphate synthase from Legionella pneumophila (strain Lens).